The chain runs to 559 residues: Potassium-transporting ATPase potassium-binding subunit (559 aa).

Helical transmembrane passes span 5-25 (GFLL…PLGS), 27-47 (LARL…RILW), 63-83 (LLAL…LLFW), 132-152 (GLTV…FALI), 170-190 (LVRI…LFFI), 253-273 (LAQM…FGEA), 283-303 (LLWA…WAEV), 327-347 (FGVL…CGAV), 356-376 (ALGG…FGGV), 379-399 (GLYG…LMIG), 416-436 (MTAL…ALAM), 484-504 (LLAF…MAIA), and 524-544 (GALF…LTFI).

Belongs to the KdpA family. In terms of assembly, the system is composed of three essential subunits: KdpA, KdpB and KdpC.

The protein localises to the cell inner membrane. In terms of biological role, part of the high-affinity ATP-driven potassium transport (or Kdp) system, which catalyzes the hydrolysis of ATP coupled with the electrogenic transport of potassium into the cytoplasm. This subunit binds the periplasmic potassium ions and delivers the ions to the membrane domain of KdpB through an intramembrane tunnel. The chain is Potassium-transporting ATPase potassium-binding subunit from Salmonella typhi.